Reading from the N-terminus, the 740-residue chain is Vacuolar protein sorting-associated protein 51 homolog (740 aa).

2 coiled-coil regions span residues 65–87 (SATD…VNLL) and 322–344 (RALD…LEVQ).

Belongs to the VPS51 family. In terms of assembly, component of the Golgi-associated retrograde protein (GARP) complex.

May act as a component of the GARP complex that is involved in retrograde transport from early and late endosomes to the trans-Golgi network (TGN). In Drosophila melanogaster (Fruit fly), this protein is Vacuolar protein sorting-associated protein 51 homolog.